Reading from the N-terminus, the 365-residue chain is Aminomethyltransferase (365 aa).

This sequence belongs to the GcvT family. In terms of assembly, the glycine cleavage system is composed of four proteins: P, T, L and H.

It catalyses the reaction N(6)-[(R)-S(8)-aminomethyldihydrolipoyl]-L-lysyl-[protein] + (6S)-5,6,7,8-tetrahydrofolate = N(6)-[(R)-dihydrolipoyl]-L-lysyl-[protein] + (6R)-5,10-methylene-5,6,7,8-tetrahydrofolate + NH4(+). Functionally, the glycine cleavage system catalyzes the degradation of glycine. In Aeromonas hydrophila subsp. hydrophila (strain ATCC 7966 / DSM 30187 / BCRC 13018 / CCUG 14551 / JCM 1027 / KCTC 2358 / NCIMB 9240 / NCTC 8049), this protein is Aminomethyltransferase.